The following is a 510-amino-acid chain: NAD(P)H-quinone oxidoreductase subunit 2, chloroplastic (510 aa).

11 consecutive transmembrane segments (helical) span residues 24–44 (LLLFHGSFIFPECILIFGLIL), 59–79 (WFYFISSTSLVMSITALLFRW), 99–119 (IFQFLILLCSTLCIPLSVEYI), 124–144 (MAITEFLLFVLTATLGGMFLC), 149–169 (LITIFVAPECFSLCSYLLSGY), 183–203 (YLLMGGASSSILVHGFSWLYG), 295–315 (WHLLLEILAILSMILGNLIAI), 323–343 (MLAYSSIGQIGYVIIGIIVGD), 347–367 (GYASMITYMLFYISMNLGTFA), 395–415 (ALSSALCLLSLGGLPPLAGFF), and 418–438 (LYLFWCGWQAGLYFLVSIGLL).

The protein belongs to the complex I subunit 2 family. NDH is composed of at least 16 different subunits, 5 of which are encoded in the nucleus.

The protein localises to the plastid. Its subcellular location is the chloroplast thylakoid membrane. The enzyme catalyses a plastoquinone + NADH + (n+1) H(+)(in) = a plastoquinol + NAD(+) + n H(+)(out). It catalyses the reaction a plastoquinone + NADPH + (n+1) H(+)(in) = a plastoquinol + NADP(+) + n H(+)(out). Its function is as follows. NDH shuttles electrons from NAD(P)H:plastoquinone, via FMN and iron-sulfur (Fe-S) centers, to quinones in the photosynthetic chain and possibly in a chloroplast respiratory chain. The immediate electron acceptor for the enzyme in this species is believed to be plastoquinone. Couples the redox reaction to proton translocation, and thus conserves the redox energy in a proton gradient. This chain is NAD(P)H-quinone oxidoreductase subunit 2, chloroplastic, found in Asparagus officinalis (Garden asparagus).